Reading from the N-terminus, the 142-residue chain is Large ribosomal subunit protein uL11 (142 aa).

It belongs to the universal ribosomal protein uL11 family. As to quaternary structure, part of the ribosomal stalk of the 50S ribosomal subunit. Interacts with L10 and the large rRNA to form the base of the stalk. L10 forms an elongated spine to which L12 dimers bind in a sequential fashion forming a multimeric L10(L12)X complex. Post-translationally, one or more lysine residues are methylated.

Functionally, forms part of the ribosomal stalk which helps the ribosome interact with GTP-bound translation factors. This chain is Large ribosomal subunit protein uL11, found in Glaesserella parasuis serovar 5 (strain SH0165) (Haemophilus parasuis).